Consider the following 204-residue polypeptide: NAD(P)H dehydrogenase (quinone) (204 aa).

Residues 3–194 form the Flavodoxin-like domain; the sequence is VLIVFYSMYG…AGARYQGRHV (192 aa). FMN is bound by residues 9 to 14 and 82 to 84; these read SMYGHI and TRF. Y11 contacts NAD(+). Residue W102 coordinates substrate. An FMN-binding site is contributed by H138.

This sequence belongs to the WrbA family. Requires FMN as cofactor.

The catalysed reaction is a quinone + NADH + H(+) = a quinol + NAD(+). The enzyme catalyses a quinone + NADPH + H(+) = a quinol + NADP(+). This Syntrophobacter fumaroxidans (strain DSM 10017 / MPOB) protein is NAD(P)H dehydrogenase (quinone).